Here is a 320-residue protein sequence, read N- to C-terminus: Aspartate carbamoyltransferase catalytic subunit (320 aa).

Positions 68 and 69 each coordinate carbamoyl phosphate. Lys-96 is an L-aspartate binding site. Carbamoyl phosphate-binding residues include Arg-118, His-148, and Gln-151. Arg-181 and Arg-236 together coordinate L-aspartate. 2 residues coordinate carbamoyl phosphate: Gly-277 and Pro-278.

This sequence belongs to the aspartate/ornithine carbamoyltransferase superfamily. ATCase family. Heterododecamer (2C3:3R2) of six catalytic PyrB chains organized as two trimers (C3), and six regulatory PyrI chains organized as three dimers (R2).

It carries out the reaction carbamoyl phosphate + L-aspartate = N-carbamoyl-L-aspartate + phosphate + H(+). It participates in pyrimidine metabolism; UMP biosynthesis via de novo pathway; (S)-dihydroorotate from bicarbonate: step 2/3. In terms of biological role, catalyzes the condensation of carbamoyl phosphate and aspartate to form carbamoyl aspartate and inorganic phosphate, the committed step in the de novo pyrimidine nucleotide biosynthesis pathway. The protein is Aspartate carbamoyltransferase catalytic subunit of Polaromonas naphthalenivorans (strain CJ2).